A 1892-amino-acid polypeptide reads, in one-letter code: Kinesin-like protein KIN-12E (1892 aa).

The disordered stretch occupies residues 1-28 (MAGHGAGGRRASTSRAAARRVEAETNEN). Residues 64–401 (NVQVLIRIRP…LKFAQRAKLI (338 aa)) enclose the Kinesin motor domain. Position 145–152 (145–152 (GQTGSGKT)) interacts with ATP. 5 coiled-coil regions span residues 406 to 438 (KVNEDASGDVMSLQRQIEDLKDQLTCLKKQQNM), 486 to 526 (SLRR…TTVK), 1066 to 1139 (LFSN…LHEQ), 1303 to 1357 (KLLQ…LAEN), and 1396 to 1528 (ISET…SYQI). Over residues 1633–1649 (LHESNSDTGHTKFEKPS) the composition is skewed to basic and acidic residues. The tract at residues 1633–1656 (LHESNSDTGHTKFEKPSGRTRGSG) is disordered. The stretch at 1780 to 1841 (MDQRKADLLE…LVGSNQAIAE (62 aa)) forms a coiled coil. Positions 1870–1892 (HARHEHSRLQAAKSSRTRRGSHQ) are disordered.

It belongs to the TRAFAC class myosin-kinesin ATPase superfamily. Kinesin family. KIN-12 subfamily.

The protein is Kinesin-like protein KIN-12E of Oryza sativa subsp. japonica (Rice).